The chain runs to 101 residues: Small ribosomal subunit protein uS14 (101 aa).

This sequence belongs to the universal ribosomal protein uS14 family. Part of the 30S ribosomal subunit. Contacts proteins S3 and S10.

Functionally, binds 16S rRNA, required for the assembly of 30S particles and may also be responsible for determining the conformation of the 16S rRNA at the A site. This Escherichia coli O139:H28 (strain E24377A / ETEC) protein is Small ribosomal subunit protein uS14.